Consider the following 614-residue polypeptide: Ankyrin repeat domain-containing protein 55 (614 aa).

The tract at residues 1–20 (MMRQATMDFSTPSVFDQQRG) is disordered. The span at 7 to 16 (MDFSTPSVFD) shows a compositional bias: polar residues. ANK repeat units follow at residues 26-55 (VDLTMVYQAASNGDVNALTAVIREDPSILE), 60-89 (EGCTPLMHAVSGRQADTVKLLLKMGANINM), 93-125 (YGRTSLCLATYLGWLEGCVSLLRNGAKHNIPDK), 126-157 (NGRLPLHAATAEPDMRLLTVLLQQSNISEINH), 161-190 (EGMTPLHWAAFHNQPQHTQMLLKKGADPTL), 194-223 (DFKTALHWAVQSGNRILCSIILSHHQGPSI), 230-260 (SGKTCVHIAAAAGFSDIIHELARVPECNLQA), 264-293 (DDRTPLHWAAAAGKAECVQSLLELGMDSNL), and 297-326 (NESTPLAYALYCGHTACVKLLSQESRTEPT). Disordered regions lie at residues 319-339 (QESRTEPTRPPPSQSSRPQKK), 354-375 (KKEEQRAHQKDPSRDRYREEDT), 454-476 (TSHAGLSSAPHHMAQRSQKSRSE), and 564-614 (RNNL…SDEN). Over residues 354–373 (KKEEQRAHQKDPSRDRYREE) the composition is skewed to basic and acidic residues. Ser475 carries the post-translational modification Phosphoserine.

This is Ankyrin repeat domain-containing protein 55 (ANKRD55) from Homo sapiens (Human).